Consider the following 667-residue polypeptide: Probable potassium transport system protein Kup (667 aa).

Helical transmembrane passes span 16–36 (GFIIALGIVYGDIGTSPLYTM), 58–78 (VSLIIWTLTLVTTIKYVLIAL), 101–121 (WLIIPAMLGGATLLSDGALTP), 146–166 (TNVILTTLLILMVLFGLQRFG), 167–187 (TGVIGKLFGPVMLVWFSVLGI), 221–241 (IFILGSIFLATTGAEALYSDL), 253–273 (WPFVKVCIILSYCGQAAWILA), 294–314 (VYLVILATLAAIIASQALISG), 343–363 (LYIPVINWSLFAVTSCTVLYF), 373–393 (YGLAITITMLMTTILLAYYLI), 399–419 (PLLASLLMAFFAFIEFIFFLA), and 431–451 (VVVLALAIVFVMVIWHAGTVI).

This sequence belongs to the HAK/KUP transporter (TC 2.A.72) family.

Its subcellular location is the cell membrane. The catalysed reaction is K(+)(in) + H(+)(in) = K(+)(out) + H(+)(out). Functionally, transport of potassium into the cell. Likely operates as a K(+):H(+) symporter. The chain is Probable potassium transport system protein Kup from Streptococcus equi subsp. zooepidemicus (strain H70).